The following is a 75-amino-acid chain: Bacteriocin lactococcin-A (75 aa).

Positions 1-21 (MKNQLNFNIVSDEELSEANGG) are excised as a propeptide. Residues 30 to 52 (AAGDLYYNTNTHKYVYQQTQNAF) traverse the membrane as a helical segment.

The protein localises to the secreted. The protein resides in the host cell membrane. In terms of biological role, kills Lactococci. The sequence is that of Bacteriocin lactococcin-A (lcnA) from Lactococcus lactis subsp. cremoris (Streptococcus cremoris).